The chain runs to 339 residues: Ornithine carbamoyltransferase (339 aa).

Residues 56-59 (STRT), R107, and 134-137 (HPTQ) each bind carbamoyl phosphate. L-ornithine is bound by residues N168, D232, and 236–237 (SM). Carbamoyl phosphate is bound by residues 274–275 (CL) and R320.

The protein belongs to the aspartate/ornithine carbamoyltransferase superfamily. OTCase family.

It is found in the cytoplasm. The catalysed reaction is carbamoyl phosphate + L-ornithine = L-citrulline + phosphate + H(+). The protein operates within amino-acid biosynthesis; L-arginine biosynthesis; L-arginine from L-ornithine and carbamoyl phosphate: step 1/3. Functionally, reversibly catalyzes the transfer of the carbamoyl group from carbamoyl phosphate (CP) to the N(epsilon) atom of ornithine (ORN) to produce L-citrulline. This chain is Ornithine carbamoyltransferase, found in Buchnera aphidicola subsp. Baizongia pistaciae (strain Bp).